The primary structure comprises 348 residues: Galactose-1-phosphate uridylyltransferase (348 aa).

A UDP-alpha-D-glucose-binding site is contributed by 28 to 31 (RAKR). Positions 52 and 55 each coordinate Zn(2+). UDP-alpha-D-glucose is bound by residues V61 and 77-78 (ND). H115 is a binding site for Zn(2+). Residues N153 and 159–161 (GCS) contribute to the UDP-alpha-D-glucose site. H164 serves as a coordination point for Zn(2+). Residue H166 is the Tele-UMP-histidine intermediate of the active site. Q168 contributes to the UDP-alpha-D-glucose binding site. The Fe cation site is built by E182, H281, H296, and H298. UDP-alpha-D-glucose-binding positions include 311–312 (KF), 316–317 (YE), and Q323.

This sequence belongs to the galactose-1-phosphate uridylyltransferase type 1 family. It depends on Zn(2+) as a cofactor.

It carries out the reaction alpha-D-galactose 1-phosphate + UDP-alpha-D-glucose = alpha-D-glucose 1-phosphate + UDP-alpha-D-galactose. It participates in carbohydrate metabolism; galactose metabolism. This chain is Galactose-1-phosphate uridylyltransferase (galT), found in Salmonella typhimurium (strain LT2 / SGSC1412 / ATCC 700720).